Reading from the N-terminus, the 175-residue chain is MEALVYAVSWAPGRTSHPDTPPNIYEGGLGAQQKQCPSAQGSKPKNFRLRHLRGLALYLPGHLQPAGQCESHWLGRLLAGGCLPQPEGLVWPLDLAQGTVGRGNSHHSALLEAQLPRDSRGNTASSSSMDPAKGAPSQSGPPEGLGLRPKRSWGAPEETTCPLCKRTRSGGLERL.

Positions 113 to 175 (AQLPRDSRGN…RTRSGGLERL (63 aa)) are disordered.

This is an uncharacterized protein from Bos taurus (Bovine).